Here is a 332-residue protein sequence, read N- to C-terminus: Cysteine and histidine-rich domain-containing protein 1 (332 aa).

N-acetylalanine is present on Ala-2. The tract at residues 2-77 (ALLCYNRGCG…KPPEPVKPEV (76 aa)) is interaction with PPP5C. Residues Cys-5, Cys-10, Cys-24, His-27, Cys-42, and Cys-43 each contribute to the Zn(2+) site. CHORD domains follow at residues 5 to 64 (CYNR…KGRH) and 157 to 216 (CKNG…TGKH). Thr-47 carries the post-translational modification Phosphothreonine. Ser-51 carries the post-translational modification Phosphoserine. Zn(2+) contacts are provided by Cys-59, His-64, Cys-157, Cys-162, Cys-176, His-179, Cys-194, Cys-195, Cys-211, and His-216. Positions 62–82 (GRHNSEKPPEPVKPEVKTTEK) are disordered. The segment covering 64 to 82 (HNSEKPPEPVKPEVKTTEK) has biased composition (basic and acidic residues). The tract at residues 65–316 (NSEKPPEPVK…AEPMQWASLE (252 aa)) is interaction with HSP90AA1 and HSP90AB1. The region spanning 227 to 316 (VVPCRHDWHQ…AEPMQWASLE (90 aa)) is the CS domain.

In terms of assembly, interacts with HSP90AA1, HSP90AB1, PPP5C, ROCK1 and ROCK2.

Regulates centrosome duplication, probably by inhibiting the kinase activity of ROCK2. Proposed to act as co-chaperone for HSP90. May play a role in the regulation of NOD1 via a HSP90 chaperone complex. In vitro, has intrinsic chaperone activity. This function may be achieved by inhibiting association of ROCK2 with NPM1. Plays a role in ensuring the localization of the tyrosine kinase receptor EGFR to the plasma membrane, and thus ensures the subsequent regulation of EGFR activity and EGF-induced actin cytoskeleton remodeling. Involved in stress response. Prevents tumorigenesis. The protein is Cysteine and histidine-rich domain-containing protein 1 (CHORDC1) of Bos taurus (Bovine).